Here is a 669-residue protein sequence, read N- to C-terminus: Putative transcription factor SOX-14 (669 aa).

Residues 1-12 (MIAKPNQATTEP) show a composition bias toward polar residues. Disordered stretches follow at residues 1–149 (MIAK…EMTL), 254–336 (YKYR…PKYE), and 419–439 (SSLT…MDNI). Residues 17–37 (RPGTVPTVPATTPARPATITI) are compositionally biased toward low complexity. Residues 52–71 (TLPPFSPSPSPASSPSPAPA) show a composition bias toward pro residues. Residues 75-84 (GAQKTQSQAA) are compositionally biased toward polar residues. The segment covering 88–105 (PAAVASPSAPVAAAAPKT) has biased composition (low complexity). Over residues 130 to 145 (RESEMDGERSPSHSGH) the composition is skewed to basic and acidic residues. A DNA-binding region (HMG box) is located at residues 187–255 (IKRPMNAFMV…LHMIEYPNYK (69 aa)). Low complexity predominate over residues 284 to 294 (TTNNNNSLTTL). Positions 295 to 318 (AINGTTTAGRKSKRSTSTCQSGSA) are enriched in polar residues. The segment covering 322–336 (LRNDSGDTSSKPKYE) has biased composition (basic and acidic residues). Residues 419–431 (SSLTQSQHNQSDP) show a composition bias toward polar residues.

It is found in the nucleus. The polypeptide is Putative transcription factor SOX-14 (Sox14) (Drosophila melanogaster (Fruit fly)).